The sequence spans 904 residues: Protein translocase subunit SecA (904 aa).

Residues Gln89, Gly107–Thr111, and Asp502 each bind ATP. The Zn(2+) site is built by Cys888, Cys890, Cys899, and His900.

This sequence belongs to the SecA family. Monomer and homodimer. Part of the essential Sec protein translocation apparatus which comprises SecA, SecYEG and auxiliary proteins SecDF-YajC and YidC. The cofactor is Zn(2+).

The protein resides in the cell inner membrane. Its subcellular location is the cytoplasm. It carries out the reaction ATP + H2O + cellular proteinSide 1 = ADP + phosphate + cellular proteinSide 2.. Part of the Sec protein translocase complex. Interacts with the SecYEG preprotein conducting channel. Has a central role in coupling the hydrolysis of ATP to the transfer of proteins into and across the cell membrane, serving both as a receptor for the preprotein-SecB complex and as an ATP-driven molecular motor driving the stepwise translocation of polypeptide chains across the membrane. This Roseobacter denitrificans (strain ATCC 33942 / OCh 114) (Erythrobacter sp. (strain OCh 114)) protein is Protein translocase subunit SecA.